A 1345-amino-acid polypeptide reads, in one-letter code: DNA-directed RNA polymerase subunit beta' (1345 aa).

Residues cysteine 60, cysteine 62, cysteine 75, and cysteine 78 each coordinate Zn(2+). 3 residues coordinate Mg(2+): aspartate 536, aspartate 538, and aspartate 540. Zn(2+) contacts are provided by cysteine 895, cysteine 974, cysteine 981, and cysteine 984. The tract at residues 1325 to 1345 (DDNDNPVDFGDEFRIDPDELK) is disordered. The segment covering 1335 to 1345 (DEFRIDPDELK) has biased composition (basic and acidic residues).

It belongs to the RNA polymerase beta' chain family. In terms of assembly, the RNAP catalytic core consists of 2 alpha, 1 beta, 1 beta' and 1 omega subunit. When a sigma factor is associated with the core the holoenzyme is formed, which can initiate transcription. Requires Mg(2+) as cofactor. It depends on Zn(2+) as a cofactor.

The catalysed reaction is RNA(n) + a ribonucleoside 5'-triphosphate = RNA(n+1) + diphosphate. In terms of biological role, DNA-dependent RNA polymerase catalyzes the transcription of DNA into RNA using the four ribonucleoside triphosphates as substrates. The chain is DNA-directed RNA polymerase subunit beta' from Bifidobacterium animalis subsp. lactis (strain AD011).